Consider the following 387-residue polypeptide: Flap endonuclease 1 (387 aa).

An N-domain region spans residues 1-104 (MGIKGLSQLI…GELEKRKERQ (104 aa)). D34 lines the Mg(2+) pocket. R70 contributes to the DNA binding site. D86, E158, E160, D179, and D181 together coordinate Mg(2+). Residues 122–253 (KMVMWNKRTT…KKALAMIKKY (132 aa)) form an I-domain region. Residue E158 coordinates DNA. DNA-binding residues include G231 and D233. D233 lines the Mg(2+) pocket. Residues 332 to 387 (SSRGKPTQTRLDGFFTPVASSSTTKKKAPAKKDDKKSATDKKRKAADASTSSKKKK) form a disordered region. Positions 338 to 346 (TQTRLDGFF) are interaction with PCNA. Basic and acidic residues predominate over residues 361–371 (AKKDDKKSATD). Positions 378 to 387 (DASTSSKKKK) are enriched in low complexity.

The protein belongs to the XPG/RAD2 endonuclease family. FEN1 subfamily. As to quaternary structure, interacts with PCNA. Three molecules of FEN1 bind to one PCNA trimer with each molecule binding to one PCNA monomer. PCNA stimulates the nuclease activity without altering cleavage specificity. The cofactor is Mg(2+). Post-translationally, phosphorylated. Phosphorylation upon DNA damage induces relocalization to the nuclear plasma.

The protein resides in the nucleus. The protein localises to the nucleolus. It is found in the nucleoplasm. Its subcellular location is the mitochondrion. In terms of biological role, structure-specific nuclease with 5'-flap endonuclease and 5'-3' exonuclease activities involved in DNA replication and repair. During DNA replication, cleaves the 5'-overhanging flap structure that is generated by displacement synthesis when DNA polymerase encounters the 5'-end of a downstream Okazaki fragment. It enters the flap from the 5'-end and then tracks to cleave the flap base, leaving a nick for ligation. Also involved in the long patch base excision repair (LP-BER) pathway, by cleaving within the apurinic/apyrimidinic (AP) site-terminated flap. Acts as a genome stabilization factor that prevents flaps from equilibrating into structures that lead to duplications and deletions. Also possesses 5'-3' exonuclease activity on nicked or gapped double-stranded DNA, and exhibits RNase H activity. Also involved in replication and repair of rDNA and in repairing mitochondrial DNA. The polypeptide is Flap endonuclease 1 (Naegleria gruberi (Amoeba)).